The chain runs to 1271 residues: MVDPVGFAEAWKAQFPDSEPPRMELRSVGDIEQELERCKASIRRLEQEVNQERFRMIYLQTLLAKEKKSYDRQRWGFRRAAQAPDGASEPRASASRPQPAPADGADPPPAEEPEARPDGEGSPGKARPGTARRPGAAASGERDDRGPPASVAALRSNFERIRKGHGQPGADAEKPFYVNVEFHHERGLVKVNDKEVSDRISSLGSQAMQMERKKSQHGAGSSVGDASRPPYRGRSSESSCGVDGDYEDAELNPRFLKDNLIDANGGSRPPWPPLEYQPYQSIYVGGMMEGEGKGPLLRSQSTSEQEKRLTWPRRSYSPRSFEDCGGGYTPDCSSNENLTSSEEDFSSGQSSRVSPSPTTYRMFRDKSRSPSQNSQQSFDSSSPPTPQCHKRHRHCPVVVSEATIVGVRKTGQIWPNDGEGAFHGDADGSFGTPPGYGCAADRAEEQRRHQDGLPYIDDSPSSSPHLSSKGRGSRDALVSGALESTKASELDLEKGLEMRKWVLSGILASEETYLSHLEALLLPMKPLKAAATTSQPVLTSQQIETIFFKVPELYEIHKEFYDGLFPRVQQWSHQQRVGDLFQKLASQLGVYRAFVDNYGVAMEMAEKCCQANAQFAEISENLRARSNKDAKDPTTKNSLETLLYKPVDRVTRSTLVLHDLLKHTPASHPDHPLLQDALRISQNFLSSINEEITPRRQSMTVKKGEHRQLLKDSFMVELVEGARKLRHVFLFTDLLLCTKLKKQSGGKTQQYDCKWYIPLTDLSFQMVDELEAVPNIPLVPDEELDALKIKISQIKNDIQREKRANKGSKATERLKKKLSEQESLLLLMSPSMAFRVHSRNGKSYTFLISSDYERAEWRENIREQQKKCFRSFSLTSVELQMLTNSCVKLQTVHSIPLTINKEDDESPGLYGFLNVIVHSATGFKQSSNLYCTLEVDSFGYFVNKAKTRVYRDTAEPNWNEEFEIELEGSQTLRILCYEKCYNKTKIPKEDGESTDRLMGKGQVQLDPQALQDRDWQRTVIAMNGIEVKLSVKFNSREFSLKRMPSRKQTGVFGVKIAVVTKRERSKVPYIVRQCVEEIERRGMEEVGIYRVSGVATDIQALKAAFDVNNKDVSVMMSEMDVNAIAGTLKLYFRELPEPLFTDEFYPNFAEGIALSDPVAKESCMLNLLLSLPEANLLTFLFLLDHLKRVAEKEAVNKMSLHNLATVFGPTLLRPSEKESKLPANPSQPITMTDSWSLEVMSQVQVLLYFLQLEAIPAPDSKRQSILFSTEV.

Residue methionine 1 is modified to N-acetylmethionine. The segment at 1-426 (MVDPVGFAEA…DGEGAFHGDA (426 aa)) is kinase. Residues 28–55 (VGDIEQELERCKASIRRLEQEVNQERFR) adopt a coiled-coil conformation. The interval 67-173 (KKSYDRQRWG…GHGQPGADAE (107 aa)) is disordered. Residues 87-105 (ASEPRASASRPQPAPADGA) are compositionally biased toward low complexity. Residue serine 122 is modified to Phosphoserine. Over residues 123–138 (PGKARPGTARRPGAAA) the composition is skewed to low complexity. Serine 139 is subject to Phosphoserine. Residue tyrosine 177 is modified to Phosphotyrosine; by HCK. The span at 185 to 198 (ERGLVKVNDKEVSD) shows a compositional bias: basic and acidic residues. Disordered regions lie at residues 185–247 (ERGL…GDYE), 286–392 (GMME…HKRH), and 416–476 (NDGE…SRDA). The segment at 197 to 385 (SDRISSLGSQ…QSFDSSSPPT (189 aa)) is binding to ABL SH2-domain. The segment covering 199–208 (RISSLGSQAM) has biased composition (polar residues). A phosphoserine mark is found at serine 202, serine 215, serine 222, and serine 236. The residue at position 246 (tyrosine 246) is a Phosphotyrosine; by FES. 2 stretches are compositionally biased toward low complexity: residues 346–356 (SSGQSSRVSPS) and 369–382 (SPSQ…DSSS). Phosphoserine is present on residues serine 356, serine 377, and serine 382. Threonine 385 carries the post-translational modification Phosphothreonine. Basic and acidic residues predominate over residues 441–451 (DRAEEQRRHQD). Phosphoserine occurs at positions 459 and 463. An Omega-N-methylarginine modification is found at arginine 471. Serine 473 and serine 488 each carry phosphoserine. One can recognise a DH domain in the interval 498-691 (MRKWVLSGIL…QNFLSSINEE (194 aa)). Tyrosine 554 is subject to Phosphotyrosine. Residue threonine 641 is modified to Phosphothreonine. Tyrosine 644 is modified (phosphotyrosine). Threonine 693 is subject to Phosphothreonine. Residues 708–866 (QLLKDSFMVE…WRENIREQQK (159 aa)) enclose the PH domain. Residues 893 to 1020 (HSIPLTINKE…QDRDWQRTVI (128 aa)) enclose the C2 domain. Phosphoserine is present on serine 894. One can recognise a Rho-GAP domain in the interval 1054 to 1248 (VKIAVVTKRE…VMSQVQVLLY (195 aa)). Residue serine 1264 is modified to Phosphoserine.

Homotetramer. Interacts with PDZK1. May interact with CCPG1. Interacts with FES/FPS, ABL1, PIK3R1 and GRB2. Interacts with HCK. Interacts with SH2D5. Interacts with DLG4. In terms of processing, autophosphorylated. Phosphorylated by FES/FPS on tyrosine residues, leading to down-regulation of the BCR kinase activity. Phosphorylation at Tyr-177 by HCK is important for interaction with GRB2.

The protein resides in the postsynaptic density. Its subcellular location is the cell projection. The protein localises to the dendritic spine. It localises to the axon. It is found in the synapse. The catalysed reaction is L-seryl-[protein] + ATP = O-phospho-L-seryl-[protein] + ADP + H(+). It carries out the reaction L-threonyl-[protein] + ATP = O-phospho-L-threonyl-[protein] + ADP + H(+). Its function is as follows. Protein with a unique structure having two opposing regulatory activities toward small GTP-binding proteins. The C-terminus is a GTPase-activating protein (GAP) domain which stimulates GTP hydrolysis by RAC1, RAC2 and CDC42. Accelerates the intrinsic rate of GTP hydrolysis of RAC1 or CDC42, leading to down-regulation of the active GTP-bound form. The central Dbl homology (DH) domain functions as guanine nucleotide exchange factor (GEF) that modulates the GTPases CDC42, RHOA and RAC1. Promotes the conversion of CDC42, RHOA and RAC1 from the GDP-bound to the GTP-bound form. The amino terminus contains an intrinsic kinase activity. Functions as an important negative regulator of neuronal RAC1 activity. Regulates macrophage functions such as CSF1-directed motility and phagocytosis through the modulation of RAC1 activity. Plays a major role as a RHOA GEF in keratinocytes being involved in focal adhesion formation and keratinocyte differentiation. The protein is Breakpoint cluster region protein of Homo sapiens (Human).